Here is a 791-residue protein sequence, read N- to C-terminus: Disintegrin and metalloproteinase domain-containing protein 1a (791 aa).

Positions 1–65 (MSVAAAGRGF…LLIFLPSTFC (65 aa)) are cleaved as a signal peptide. The N-linked (GlcNAc...) asparagine glycan is linked to N72. The interval 201-220 (CSVTPKDSPGDTSHPPRSRK) is disordered. One can recognise a Peptidase M12B domain in the interval 235–429 (KYVEMFVVVN…HRGACLLDEP (195 aa)). Residue N256 is glycosylated (N-linked (GlcNAc...) asparagine). Disulfide bonds link C345-C424, C385-C408, and C387-C393. H370 contacts Zn(2+). Residue E371 is part of the active site. Residues H374 and H380 each coordinate Zn(2+). N407 and N484 each carry an N-linked (GlcNAc...) asparagine glycan. Residues 438–522 (AANCGNGVVE…ECPANSYMQD (85 aa)) form the Disintegrin domain. An intrachain disulfide couples C494 to C514. The N-linked (GlcNAc...) asparagine glycan is linked to N630. The EGF-like domain maps to 663–697 (LQYNCEPQEMCHGNGVCNNFKHCHCDAGFAPPDCS). Disulfide bonds link C667–C679, C673–C685, and C687–C696. Residues 741–761 (VMVLVVPIFLVVLLCCLMLIA) traverse the membrane as a helical segment. Topologically, residues 762 to 791 (YLWSEVQEVVSPPSSSESSSSSSWSDSDSQ) are cytoplasmic. The disordered stretch occupies residues 772–791 (SPPSSSESSSSSSWSDSDSQ).

In terms of assembly, heterodimer with ADAM2/fertilin subunit beta. Testis.

The protein localises to the membrane. Functionally, may be involved in sperm-egg fusion. The polypeptide is Disintegrin and metalloproteinase domain-containing protein 1a (Adam1a) (Mus musculus (Mouse)).